Reading from the N-terminus, the 254-residue chain is Pimeloyl-[acyl-carrier protein] methyl ester esterase (254 aa).

An AB hydrolase-1 domain is found at 14-238 (VVMLHGWGLH…QASHAPFLSH (225 aa)). Substrate is bound by residues Trp-20, 80-81 (SL), and 142-146 (FLALQ). Ser-80 (nucleophile) is an active-site residue. Residues Asp-204 and His-232 contribute to the active site. Substrate is bound at residue His-232.

This sequence belongs to the AB hydrolase superfamily. Carboxylesterase BioH family. Monomer.

The protein resides in the cytoplasm. It carries out the reaction 6-carboxyhexanoyl-[ACP] methyl ester + H2O = 6-carboxyhexanoyl-[ACP] + methanol + H(+). The protein operates within cofactor biosynthesis; biotin biosynthesis. Its function is as follows. The physiological role of BioH is to remove the methyl group introduced by BioC when the pimeloyl moiety is complete. It allows to synthesize pimeloyl-ACP via the fatty acid synthetic pathway through the hydrolysis of the ester bonds of pimeloyl-ACP esters. This is Pimeloyl-[acyl-carrier protein] methyl ester esterase from Chromobacterium violaceum (strain ATCC 12472 / DSM 30191 / JCM 1249 / CCUG 213 / NBRC 12614 / NCIMB 9131 / NCTC 9757 / MK).